Reading from the N-terminus, the 274-residue chain is 2,3,4,5-tetrahydropyridine-2,6-dicarboxylate N-succinyltransferase (274 aa).

Positions 106 and 143 each coordinate substrate.

Belongs to the transferase hexapeptide repeat family. Homotrimer.

The protein resides in the cytoplasm. It carries out the reaction (S)-2,3,4,5-tetrahydrodipicolinate + succinyl-CoA + H2O = (S)-2-succinylamino-6-oxoheptanedioate + CoA. It functions in the pathway amino-acid biosynthesis; L-lysine biosynthesis via DAP pathway; LL-2,6-diaminopimelate from (S)-tetrahydrodipicolinate (succinylase route): step 1/3. The sequence is that of 2,3,4,5-tetrahydropyridine-2,6-dicarboxylate N-succinyltransferase from Rickettsia felis (strain ATCC VR-1525 / URRWXCal2) (Rickettsia azadi).